The following is a 321-amino-acid chain: Lipoyl synthase (321 aa).

[4Fe-4S] cluster-binding residues include Cys68, Cys73, Cys79, Cys94, Cys98, Cys101, and Ser308. Residues 80–297 (FNHGTATFMI…KEIALELGFT (218 aa)) enclose the Radical SAM core domain.

This sequence belongs to the radical SAM superfamily. Lipoyl synthase family. [4Fe-4S] cluster serves as cofactor.

It is found in the cytoplasm. The catalysed reaction is [[Fe-S] cluster scaffold protein carrying a second [4Fe-4S](2+) cluster] + N(6)-octanoyl-L-lysyl-[protein] + 2 oxidized [2Fe-2S]-[ferredoxin] + 2 S-adenosyl-L-methionine + 4 H(+) = [[Fe-S] cluster scaffold protein] + N(6)-[(R)-dihydrolipoyl]-L-lysyl-[protein] + 4 Fe(3+) + 2 hydrogen sulfide + 2 5'-deoxyadenosine + 2 L-methionine + 2 reduced [2Fe-2S]-[ferredoxin]. The protein operates within protein modification; protein lipoylation via endogenous pathway; protein N(6)-(lipoyl)lysine from octanoyl-[acyl-carrier-protein]: step 2/2. Functionally, catalyzes the radical-mediated insertion of two sulfur atoms into the C-6 and C-8 positions of the octanoyl moiety bound to the lipoyl domains of lipoate-dependent enzymes, thereby converting the octanoylated domains into lipoylated derivatives. The protein is Lipoyl synthase of Vibrio campbellii (strain ATCC BAA-1116).